Here is a 772-residue protein sequence, read N- to C-terminus: Mitochondrial intermediate peptidase (772 aa).

The transit peptide at 1 to 37 (MLRTIILKAGSNASIPSLSRQNKLLRFFATAGAVSRT) directs the protein to the mitochondrion. H558 serves as a coordination point for Zn(2+). The active site involves E559. Zn(2+) contacts are provided by H562 and H565.

This sequence belongs to the peptidase M3 family. Requires Zn(2+) as cofactor.

It is found in the mitochondrion matrix. It catalyses the reaction Release of an N-terminal octapeptide as second stage of processing of some proteins imported into the mitochondrion.. Its activity is regulated as follows. Stimulated by Fe(2+). In terms of biological role, cleaves proteins, imported into the mitochondrion, to their mature size. While most mitochondrial precursor proteins are processed to the mature form in one step by mitochondrial processing peptidase (MPP), the sequential cleavage by MIP of an octapeptide after initial processing by MPP is a required step for a subgroup of nuclear-encoded precursor proteins destined for the matrix or the inner membrane. Cleaves precursor proteins of respiratory components, including subunits of the electron transport chain and tricarboxylic acid cycle enzymes, and components of the mitochondrial genetic machinery, including ribosomal proteins, translation factors, and proteins required for mitochondrial DNA metabolism. The polypeptide is Mitochondrial intermediate peptidase (OCT1) (Saccharomyces cerevisiae (strain YJM789) (Baker's yeast)).